The chain runs to 97 residues: Putative pterin-4-alpha-carbinolamine dehydratase (97 aa).

Belongs to the pterin-4-alpha-carbinolamine dehydratase family.

It carries out the reaction (4aS,6R)-4a-hydroxy-L-erythro-5,6,7,8-tetrahydrobiopterin = (6R)-L-erythro-6,7-dihydrobiopterin + H2O. This chain is Putative pterin-4-alpha-carbinolamine dehydratase, found in Dinoroseobacter shibae (strain DSM 16493 / NCIMB 14021 / DFL 12).